A 361-amino-acid polypeptide reads, in one-letter code: Chorismate synthase (361 aa).

Residue R47 coordinates NADP(+). FMN-binding positions include 124 to 126, G286, 301 to 305, and R327; these read RAS and KPTAT.

This sequence belongs to the chorismate synthase family. Homotetramer. FMNH2 is required as a cofactor.

It catalyses the reaction 5-O-(1-carboxyvinyl)-3-phosphoshikimate = chorismate + phosphate. It participates in metabolic intermediate biosynthesis; chorismate biosynthesis; chorismate from D-erythrose 4-phosphate and phosphoenolpyruvate: step 7/7. In terms of biological role, catalyzes the anti-1,4-elimination of the C-3 phosphate and the C-6 proR hydrogen from 5-enolpyruvylshikimate-3-phosphate (EPSP) to yield chorismate, which is the branch point compound that serves as the starting substrate for the three terminal pathways of aromatic amino acid biosynthesis. This reaction introduces a second double bond into the aromatic ring system. The sequence is that of Chorismate synthase from Prochlorococcus marinus (strain NATL1A).